A 747-amino-acid chain; its full sequence is MSTTISDSIASMISRINDIVITVAPSGDSNDSHRHSQIICDGGRTIQPLDDSSETTLAYADPNNPYLSNIDGDFRPIEQLSEEAAVEQATQLREAIREHDYQYYIRASPIIADRAYDILFDRLQALEDIFNLDTEASPTRRVGGEPLDELETVEHVTSMLSIDQSTAVDSVRDFDERVRDVVGDLEYICEPKFDGLSVEVIYEDGEYIRAATRGDGNRGDDVTAQVETVGAVPLKLHGDYPSYLAVRGEVYMPKAGFREYNRERIECDEKPFANPRNAAAGTLRQLDPGVVAERPLSCFFYDILDATELPPDQWTTLNDLQSWGLRTNDRISRVDSIDDAIAYRDQLKAARAELNYEIDGTVIKVNDRGNREILGATSRSVRWAFAYKFPPRAEITHITDIVVQVGRTGRLTPVALLDPVDVGGVTVSRASLHNPEEIKRLSVNSGDEVRVRRAGDVIPEVAEVTQKRATGTFNFPNQCPICHSSVEQDGPLAFCTGGLTCDAQLVRTIVHYGSRSALDIDGLGEQRVEQLVESGVIGELADLYTLSVADLSKLDGWGTTSAENLIQAISETQTPSLTDFLVGLGIPEVGPTIARNLAGTFDNFDAIIDADEAALREIEDIGPTVSTHISEFFTNEQNRAAIDNLLSAGVTPQTQQSTATTNAPLSDLTFVFTGSLSVPRTTATTYIERHGGNATGSVSSNTDYLVIGDNPGSTKRIDAERNDVPEIDETEFTELLAEHDDTLTWPP.

NAD(+) contacts are provided by residues 113 to 117 (DRAYD), 161 to 162 (SI), and E190. The N6-AMP-lysine intermediate role is filled by K192. 4 residues coordinate NAD(+): R213, E249, K364, and K388. Zn(2+) is bound by residues C479, C482, C495, and C501. A BRCT domain is found at 660-747 (TTNAPLSDLT…EHDDTLTWPP (88 aa)).

Belongs to the NAD-dependent DNA ligase family. LigA subfamily. Mg(2+) is required as a cofactor. The cofactor is Mn(2+).

The enzyme catalyses NAD(+) + (deoxyribonucleotide)n-3'-hydroxyl + 5'-phospho-(deoxyribonucleotide)m = (deoxyribonucleotide)n+m + AMP + beta-nicotinamide D-nucleotide.. DNA ligase that catalyzes the formation of phosphodiester linkages between 5'-phosphoryl and 3'-hydroxyl groups in double-stranded DNA using NAD as a coenzyme and as the energy source for the reaction. It is essential for DNA replication and repair of damaged DNA. This Haloquadratum walsbyi (strain DSM 16790 / HBSQ001) protein is DNA ligase.